Here is a 631-residue protein sequence, read N- to C-terminus: Glutamine--fructose-6-phosphate aminotransferase [isomerizing] (631 aa).

C2 acts as the Nucleophile; for GATase activity in catalysis. The 224-residue stretch at C2 to L225 folds into the Glutamine amidotransferase type-2 domain. SIS domains follow at residues L298–S446 and L480–P621. The active-site For Fru-6P isomerization activity is the K626.

Homodimer.

Its subcellular location is the cytoplasm. It catalyses the reaction D-fructose 6-phosphate + L-glutamine = D-glucosamine 6-phosphate + L-glutamate. Its function is as follows. Catalyzes the first step in hexosamine metabolism, converting fructose-6P into glucosamine-6P using glutamine as a nitrogen source. This is Glutamine--fructose-6-phosphate aminotransferase [isomerizing] from Synechocystis sp. (strain ATCC 27184 / PCC 6803 / Kazusa).